We begin with the raw amino-acid sequence, 682 residues long: Potassium-transporting ATPase ATP-binding subunit (682 aa).

Helical transmembrane passes span 34–54 (PVMFIVWIGSLLTTCISIAMA), 62–82 (ALFSAAISGWLWVTVLFANFA), 219–239 (IALTILLIALTIVFLLATATL), and 254–274 (VLVALLVCLIPTTIGGLLSAI). The active-site 4-aspartylphosphate intermediate is the Asp307. ATP is bound by residues Asp344, Glu348, 377–384 (FTAQSRMS), and Lys395. Positions 518 and 522 each coordinate Mg(2+). Helical transmembrane passes span 588 to 608 (FAIIPAAFAATYPQLNALNIM), 616 to 636 (AILSAVIFNALIIVFLIPLAL), and 656 to 676 (IYGLGGLLVPFIGIKVIDLLL).

Belongs to the cation transport ATPase (P-type) (TC 3.A.3) family. Type IA subfamily. As to quaternary structure, the system is composed of three essential subunits: KdpA, KdpB and KdpC.

The protein resides in the cell inner membrane. The catalysed reaction is K(+)(out) + ATP + H2O = K(+)(in) + ADP + phosphate + H(+). Functionally, part of the high-affinity ATP-driven potassium transport (or Kdp) system, which catalyzes the hydrolysis of ATP coupled with the electrogenic transport of potassium into the cytoplasm. This subunit is responsible for energy coupling to the transport system and for the release of the potassium ions to the cytoplasm. In Escherichia coli (strain UTI89 / UPEC), this protein is Potassium-transporting ATPase ATP-binding subunit.